We begin with the raw amino-acid sequence, 326 residues long: Lipoyl synthase (326 aa).

[4Fe-4S] cluster contacts are provided by C56, C61, C67, C82, C86, C89, and S298. Residues W68–S287 form the Radical SAM core domain.

This sequence belongs to the radical SAM superfamily. Lipoyl synthase family. Requires [4Fe-4S] cluster as cofactor.

The protein localises to the cytoplasm. It catalyses the reaction [[Fe-S] cluster scaffold protein carrying a second [4Fe-4S](2+) cluster] + N(6)-octanoyl-L-lysyl-[protein] + 2 oxidized [2Fe-2S]-[ferredoxin] + 2 S-adenosyl-L-methionine + 4 H(+) = [[Fe-S] cluster scaffold protein] + N(6)-[(R)-dihydrolipoyl]-L-lysyl-[protein] + 4 Fe(3+) + 2 hydrogen sulfide + 2 5'-deoxyadenosine + 2 L-methionine + 2 reduced [2Fe-2S]-[ferredoxin]. The protein operates within protein modification; protein lipoylation via endogenous pathway; protein N(6)-(lipoyl)lysine from octanoyl-[acyl-carrier-protein]: step 2/2. In terms of biological role, catalyzes the radical-mediated insertion of two sulfur atoms into the C-6 and C-8 positions of the octanoyl moiety bound to the lipoyl domains of lipoate-dependent enzymes, thereby converting the octanoylated domains into lipoylated derivatives. This chain is Lipoyl synthase, found in Streptomyces griseus subsp. griseus (strain JCM 4626 / CBS 651.72 / NBRC 13350 / KCC S-0626 / ISP 5235).